The following is a 154-amino-acid chain: Superoxide dismutase [Cu-Zn] (154 aa).

Positions 47, 49, and 64 each coordinate Cu cation. The cysteines at positions 58 and 147 are disulfide-linked. Positions 64, 72, 81, and 84 each coordinate Zn(2+). Residue H121 participates in Cu cation binding. Residues 125 to 137 (DDLGRSEHPESKK) are compositionally biased toward basic and acidic residues. The segment at 125–144 (DDLGRSEHPESKKTGNAGAR) is disordered. R144 is a substrate binding site.

The protein belongs to the Cu-Zn superoxide dismutase family. As to quaternary structure, homodimer. Requires Cu cation as cofactor. It depends on Zn(2+) as a cofactor.

Its subcellular location is the cytoplasm. It carries out the reaction 2 superoxide + 2 H(+) = H2O2 + O2. Its function is as follows. Destroys radicals which are normally produced within the cells and which are toxic to biological systems. The chain is Superoxide dismutase [Cu-Zn] (sodC) from Aspergillus oryzae (strain ATCC 42149 / RIB 40) (Yellow koji mold).